A 141-amino-acid chain; its full sequence is Nucleoside diphosphate kinase (141 aa).

Residues Lys11, Phe59, Arg87, Thr93, Arg104, and Asn114 each contribute to the ATP site. The active-site Pros-phosphohistidine intermediate is His117.

The protein belongs to the NDK family. As to quaternary structure, homotetramer. It depends on Mg(2+) as a cofactor.

The protein resides in the cytoplasm. The enzyme catalyses a 2'-deoxyribonucleoside 5'-diphosphate + ATP = a 2'-deoxyribonucleoside 5'-triphosphate + ADP. The catalysed reaction is a ribonucleoside 5'-diphosphate + ATP = a ribonucleoside 5'-triphosphate + ADP. Functionally, major role in the synthesis of nucleoside triphosphates other than ATP. The ATP gamma phosphate is transferred to the NDP beta phosphate via a ping-pong mechanism, using a phosphorylated active-site intermediate. The polypeptide is Nucleoside diphosphate kinase (Delftia acidovorans (strain DSM 14801 / SPH-1)).